The following is a 160-amino-acid chain: Probable cyclic pyranopterin monophosphate synthase (160 aa).

A compositionally biased stretch (basic and acidic residues) spans 1–12; it reads MSDDSELTHVTD. The disordered stretch occupies residues 1–24; the sequence is MSDDSELTHVTDDGDAQMVDVGEK. Substrate is bound by residues 78–80 and 114–115; these read MCH and ME. The active site involves Asp129.

The protein belongs to the MoaC family. As to quaternary structure, homohexamer; trimer of dimers.

The catalysed reaction is (8S)-3',8-cyclo-7,8-dihydroguanosine 5'-triphosphate = cyclic pyranopterin phosphate + diphosphate. It participates in cofactor biosynthesis; molybdopterin biosynthesis. In terms of biological role, catalyzes the conversion of (8S)-3',8-cyclo-7,8-dihydroguanosine 5'-triphosphate to cyclic pyranopterin monophosphate (cPMP). This Natronomonas pharaonis (strain ATCC 35678 / DSM 2160 / CIP 103997 / JCM 8858 / NBRC 14720 / NCIMB 2260 / Gabara) (Halobacterium pharaonis) protein is Probable cyclic pyranopterin monophosphate synthase.